The following is a 210-amino-acid chain: Keratin-associated protein 26-1 (210 aa).

The protein belongs to the PMG family. In terms of assembly, interacts with hair keratins. As to expression, localized high up in the well differentiated portion of the hair follicle cuticle (about 10-15 cell layers above the apex of the dermal papilla).

In the hair cortex, hair keratin intermediate filaments are embedded in an interfilamentous matrix, consisting of hair keratin-associated proteins (KRTAP), which are essential for the formation of a rigid and resistant hair shaft through their extensive disulfide bond cross-linking with abundant cysteine residues of hair keratins. The matrix proteins include the high-sulfur and high-glycine-tyrosine keratins. The protein is Keratin-associated protein 26-1 (KRTAP26-1) of Homo sapiens (Human).